The primary structure comprises 1407 residues: MKDLLKFLKAQTKTEEFDAIKIALASPDMIRSWSFGEVKKPETINYRTFKPERDGLFCARIFGPVKDYECLCGKYKRLKHRGVICEKCGVEVTQTKVRRERMGHIELASPTAHIWFLKSLPSRIGLLLDMPLRDIERVLYFESYVVIEGGMTNLERSQILTEEQYLDALEEFGDEFDAKMGAEAIQALLKSMDLEAECEQLREELNETNSETKRKKLTKRIKLLEAFVQSGNKPEWMILTVLPVLPPDLRPLVPLDGGRFATSDLNDLYRRVINRNNRLKRLLDLAAPDIIVRNEKRMLQEAVDALLDNGRRGRAITGSNKRPLKSLADMIKGKQGRFRQNLLGKRVDYSGRSVITVGPYLRLHQCGLPKKMALELFKPFIYGKLELRGLATTIKAAKKMVEREEAVVWDILDEVIREHPVLLNRAPTLHRLGIQAFEPVLIEGKAIQLHPLVCAAYNADFDGDQMAVHVPLTLEAQLEARALMMSTNNILSPANGEPIIVPSQDVVLGLYYMTRDKINAKGEGMVLTGPKEAERLYRSGQAELHARVKVRITEYEKDANGEFVAKTSLIDTTVGRAILWMIVPKGLPFSIVNQPLGKKAISKMLNTCYRILGLKPTVIFADQTMYTGFAYAARSGASVGIDDMVIPAKKAEIIAEAEAEVAEIQEQFQSGLVTAGERYNKVIDIWAAANDRVSKAMMDNLQTETVINRNGEEEQQVSFNSIYMMADSGARGSAAQIRQLAGMRGLMAKPDGSIIETPITANFREGLNVLQYFISTHGARKGLADTALKTANSGYLTRRLVDVAQDLVVTEDDCGTLEGITMTPVIEGGDVKEPLRDRVLGRVTAEDVLKPGTADILVARNTLLNEQWCDILEANSVDSVKVRSVVTCDTDFGVCAHCYGRDLARGHIINKGEAIGVIAAQSIGEPGTQLTMRTFHIGGAASRAAAESSIQVKNKGSIRLSNAKSVVNSSGKLVVTSRNTELKLIDEFGRTKESYKVPYGAVMAKGDGEQVAGGETVANWDPHTMPVITEVAGYIRFTDMIDGQTITRQTDELTGLSSLVVLDSAERTAGGKDLRPALKIVDANGNDVLIPGTDMPAQYFLPGKAIVQLEDGVQISSGDTLARIPQESGGTKDITGGLPRVADLFEARRPKEPAILAEVAGIVSFGKETKGKRRLVITPVDGGDAYEEMIPKWRQLNVFEGERVERGDVISDGPEAPHDILRLRGVQAVTRYIVNEVQDVYRLQGVKINDKHIEVIVRQMLRKATIMDAGSSEFLEGEQVEYSRVKIANRELEANGKVSATYMRDLLGITKASLATESFISAASFQETTRVLTEAAVAGKRDELRGLKENVIVGRLIPAGTGYAYHQDRMRRRAAGELPAAPQVTAEDASASLAELLNAGLGGNDNE.

Zn(2+) contacts are provided by C70, C72, C85, and C88. D460, D462, and D464 together coordinate Mg(2+). Zn(2+) contacts are provided by C814, C888, C895, and C898.

This sequence belongs to the RNA polymerase beta' chain family. The RNAP catalytic core consists of 2 alpha, 1 beta, 1 beta' and 1 omega subunit. When a sigma factor is associated with the core the holoenzyme is formed, which can initiate transcription. Mg(2+) is required as a cofactor. Requires Zn(2+) as cofactor.

It catalyses the reaction RNA(n) + a ribonucleoside 5'-triphosphate = RNA(n+1) + diphosphate. In terms of biological role, DNA-dependent RNA polymerase catalyzes the transcription of DNA into RNA using the four ribonucleoside triphosphates as substrates. This chain is DNA-directed RNA polymerase subunit beta', found in Cronobacter sakazakii (strain ATCC BAA-894) (Enterobacter sakazakii).